We begin with the raw amino-acid sequence, 433 residues long: 5-methylthioadenosine/S-adenosylhomocysteine deaminase (433 aa).

The Zn(2+) site is built by His-67 and His-69. 3 residues coordinate substrate: Glu-96, Arg-148, and His-187. A Zn(2+)-binding site is contributed by His-214. Residues Glu-217 and Asp-302 each coordinate substrate. Asp-302 is a binding site for Zn(2+).

Belongs to the metallo-dependent hydrolases superfamily. MTA/SAH deaminase family. Zn(2+) is required as a cofactor.

It carries out the reaction S-adenosyl-L-homocysteine + H2O + H(+) = S-inosyl-L-homocysteine + NH4(+). It catalyses the reaction S-methyl-5'-thioadenosine + H2O + H(+) = S-methyl-5'-thioinosine + NH4(+). Functionally, catalyzes the deamination of 5-methylthioadenosine and S-adenosyl-L-homocysteine into 5-methylthioinosine and S-inosyl-L-homocysteine, respectively. Is also able to deaminate adenosine. The chain is 5-methylthioadenosine/S-adenosylhomocysteine deaminase from Carboxydothermus hydrogenoformans (strain ATCC BAA-161 / DSM 6008 / Z-2901).